The primary structure comprises 54 residues: Ovomucoid (54 aa).

Positions 4-54 constitute a Kazal-like domain; that stretch reads VDCSDHPKPVCSLEYMPLCGSDSKTYSNKCDFCNAVVESNGTLTLSHFGKC. Intrachain disulfides connect Cys6–Cys36, Cys14–Cys33, and Cys22–Cys54. An N-linked (GlcNAc...) asparagine glycan is attached at Asn43.

The protein resides in the secreted. This is Ovomucoid from Rhea americana (Greater rhea).